Here is a 174-residue protein sequence, read N- to C-terminus: NADH-ubiquinone oxidoreductase chain 6 (174 aa).

4 helical membrane passes run 25–45 (SMGL…GIYV), 48–68 (FWFS…LFIY), 82–102 (FKLT…FFIL), and 143–163 (LITL…VKIT).

This sequence belongs to the complex I subunit 6 family.

Its subcellular location is the mitochondrion membrane. It carries out the reaction a ubiquinone + NADH + 5 H(+)(in) = a ubiquinol + NAD(+) + 4 H(+)(out). Functionally, core subunit of the mitochondrial membrane respiratory chain NADH dehydrogenase (Complex I) that is believed to belong to the minimal assembly required for catalysis. Complex I functions in the transfer of electrons from NADH to the respiratory chain. The immediate electron acceptor for the enzyme is believed to be ubiquinone. This is NADH-ubiquinone oxidoreductase chain 6 (mt:ND6) from Anopheles gambiae (African malaria mosquito).